The following is a 457-amino-acid chain: Multidrug resistance protein MdtK (457 aa).

12 helical membrane-spanning segments follow: residues 11–31 (LLALAIPVILAQVAQTAMGFV), 53–73 (IWLPAILFGHGLLLALTPVIA), 93–113 (WLASFVSVLVMIVLWNAGYII), 127–147 (AVGYLRALLWGAPGYLFFQVA), 160–180 (GMVMGFLGLLVNIPVNYIFIY), 188–208 (LGGIGCGVATAAVYWVMFIAM), 243–263 (LPIALALFFEVTLFAVVALLV), 276–296 (IALNFSSLMFVLPMSLAAAVT), 314–334 (AARTGLSVGVCMAVVTAIFTV), 357–377 (LMLLAAVYQISDSIQVIGSGI), 387–407 (IFFITFTAYWVLGLPSGYILA), and 418–438 (PAGFWMGFIIGLTSAAVLMML).

The protein belongs to the multi antimicrobial extrusion (MATE) (TC 2.A.66.1) family. MdtK subfamily.

It is found in the cell inner membrane. In terms of biological role, multidrug efflux pump that functions probably as a Na(+)/drug antiporter. This is Multidrug resistance protein MdtK from Salmonella arizonae (strain ATCC BAA-731 / CDC346-86 / RSK2980).